A 337-amino-acid polypeptide reads, in one-letter code: Protein XAP5 CIRCADIAN TIMEKEEPER (337 aa).

Position 2 is an N-acetylserine (S2). Coiled coils occupy residues Q13–S41 and T72–R121. The segment covering K23–S37 has biased composition (basic and acidic residues). The disordered stretch occupies residues K23–G47. The span at K38–G47 shows a compositional bias: polar residues. The segment at A125 to A174 is disordered. A compositionally biased stretch (acidic residues) spans E126–G137. Phosphoserine is present on S132. Positions D165–A174 are enriched in basic and acidic residues.

The protein belongs to the FAM50 family. Expressed in leaves stems, flowers, roots, trichomes and hypocotyls.

Its subcellular location is the nucleus. Functionally, involved in light regulation of the circadian clock and photomorphogenesis. May play a global role in coordinating growth in response to the light environment. Acts as a light quality sensor directing both negative and positive transcriptional regulation. Inhibits growth in red light but promote growth in blue light. Inhibits clock gene expression in diurnal cycles. Plays no role in the control of flowering time. The chain is Protein XAP5 CIRCADIAN TIMEKEEPER (XCT) from Arabidopsis thaliana (Mouse-ear cress).